The sequence spans 1270 residues: Myosin-3 (1270 aa).

A disordered region spans residues 1–20 (MAVIKKGARRKDVKEPKKRS). One can recognise a Myosin motor domain in the interval 36–715 (VGVSDLTLLS…SLFALEDMRD (680 aa)). 129 to 136 (GESGAGKT) lines the ATP pocket. Position 357 is a phosphoserine (S357). The actin-binding stretch occupies residues 404–486 (SIGILDIYGF…PGILAAMNDS (83 aa)). IQ domains follow at residues 719-739 (YNMAARIQRAWRRFLQRRIDA) and 740-765 (AIKIQRTIREKKGGNKYVKLRDYGTK). The TH1 domain maps to 771–961 (KERRSMSLLG…TIYVRRGHPA (191 aa)). 3 disordered regions span residues 951–1015 (STIY…QKPV), 1029–1136 (YNPK…GSSS), and 1215–1270 (VQFG…DDDW). Residues 980–1000 (IKSKKSKHKSTHKHTHSHRSH) are compositionally biased toward basic residues. Over residues 1066–1078 (KKASSSHKSSSAK) the composition is skewed to low complexity. The span at 1089–1098 (GVEKNKEPLK) shows a compositional bias: basic and acidic residues. Pro residues predominate over residues 1107–1116 (PIPPPPPPMG). In terms of domain architecture, SH3 spans 1118–1180 (PKDPKFEAAY…PTAYMTPYKD (63 aa)). Positions 1215 to 1234 (VQFGSATVGPTSDNQSNPVG) are enriched in polar residues. Residues 1256 to 1270 (ADDDDNDDGDDDDDW) show a composition bias toward acidic residues.

The protein belongs to the TRAFAC class myosin-kinesin ATPase superfamily. Myosin family. Interacts (via myosin motor domain) with SHE4; this interaction is important for proper localization and may regulate the interaction of the motor domain with actin. Interacts (via SH3 domain) with VRP1; this interaction is required for localization to sites of polarized growth and may regulate the interaction of the tail domain with actin. Interacts (via SH3 domain) with PAN1; this interaction is important for late stages of endocytopsis. Interacts (via SH3 domain) with BBC1 and LAS17. Interacts (via C-terminal acidic tail) with ARC19 and ARC40; ARC19 and ARC40 are Arp2/3 complex subunits. In terms of processing, phosphorylation of the TEDS site (Ser-357) is required for the polarization of the actin cytoskeleton and for ligand-induced, but not for constitutive internalization of STE2. Phosphorylation probably activates the myosin-I ATPase. Ser-357 is phosphorylated by CLA4 and STE20 in vitro.

The protein resides in the cytoplasm. It localises to the cytoskeleton. Its subcellular location is the actin patch. Functionally, one of two redundant type-I myosins implicated in the organization of the actin cytoskeleton. Required for proper actin cytoskeleton polarization and for the internalization step in endocytosis. At the cell cortex, assembles in patch-like structures together with proteins from the actin-polymerizing machinery and promotes actin assembly. Functions redundantly with LAS17 as actin nucleation-promoting factor (NPF) for the Arp2/3 complex. Motor domain phosphorylation by PAK kinases CLA4 and STE20 promotes CDC42-regulated actin assembly. Functions together with the NPF PAN1 in late stages of endocytosis. Motor domain phosphorylation by PDK1 kinases PKH1 and PKH2, and by SGK kinases YPK1 and YPK2, promotes ligand-induced, but not constitutive endocytosis of the G protein-coupled receptor STE2. This is Myosin-3 (MYO3) from Saccharomyces cerevisiae (strain YJM789) (Baker's yeast).